The chain runs to 317 residues: uncharacterized protein (317 aa).

An HTH lysR-type domain is found at 29–86 (IDLNLLTIFEAVYVHKGIVNAAKVLNLTPSAISQSIQKLRVIFPDPLFIRKGQGVTPT). Residues 46–65 (IVNAAKVLNLTPSAISQSIQ) constitute a DNA-binding region (H-T-H motif).

The protein belongs to the LysR transcriptional regulatory family.

This is an uncharacterized protein from Escherichia coli (strain K12).